A 694-amino-acid chain; its full sequence is Glycine--tRNA ligase beta subunit (694 aa).

Belongs to the class-II aminoacyl-tRNA synthetase family. Tetramer of two alpha and two beta subunits.

It is found in the cytoplasm. It catalyses the reaction tRNA(Gly) + glycine + ATP = glycyl-tRNA(Gly) + AMP + diphosphate. The polypeptide is Glycine--tRNA ligase beta subunit (Moorella thermoacetica (strain ATCC 39073 / JCM 9320)).